Consider the following 225-residue polypeptide: UPF0758 protein MADE_1000235 (225 aa).

In terms of domain architecture, MPN spans 102–224; it reads VFNNVDDTKR…TISFAQRGLL (123 aa). The Zn(2+) site is built by histidine 173, histidine 175, and aspartate 186. The JAMM motif signature appears at 173–186; the sequence is HNHPSGVAEPSHAD.

This sequence belongs to the UPF0758 family.

The protein is UPF0758 protein MADE_1000235 of Alteromonas mediterranea (strain DSM 17117 / CIP 110805 / LMG 28347 / Deep ecotype).